The primary structure comprises 595 residues: MSKVAKYRRQVSEDPDIDSLLSTLSPEEMEELEKELDVVDPDGSIPVGLRQRNQTDKQPSGSFNREAMLNFCEKESKKIIQREMSVDESKQVGRKTDAKNGEDKGSNASRKALGPRQDSDVGKEPKKGVLKKSFSRDREEADSRGSEKPKEEKVIRGIDKGRVRAAVDRKEAGKDGREERAAATTKKEEEKTGSVRNAGLSRDKDKKREEVKEPSKKEEVKLTAENRSTVGRQEDGKQKESREDRDKKPEVKGIGCGSRDSRKEDEKVKKEETQPDKGVREEGKTREKQPPSGPSKPSDGQARAEEEAAPSIFDEPLEKVKNNDPEMTEVNVNNSDCITNEILVRFTEALEFNTVVKVFALANTRADDHVAFAIAIMLKANKTITSLNLDSNHITGKGILAIFRALLQNNTLTELRFHNQRHICGGKTEMEIAKLLKENTTLLKLGYHFELAGPRMTVTNLLSRNMDKQRQKRLQEQKQAQEASGEKKDRLEVPKVGALPKGSPKPSPQPSPKSAPKNSPKKAGVPAAPPPPPPPLAPPLIMENLKNSLSPATQRKMGDKVLPAQEKNSRDQLLAAIRSSNLKQLKKVEVPKLLQ.

Disordered regions lie at residues 1 to 322 (MSKV…KVKN) and 467 to 568 (DKQR…QEKN). S12 is subject to Phosphoserine. A compositionally biased stretch (acidic residues) spans 27–40 (EEMEELEKELDVVD). 8 stretches are compositionally biased toward basic and acidic residues: residues 72-105 (CEKE…EDKG), 117-127 (QDSDVGKEPKK), 134-193 (FSRD…EKTG), 201-224 (SRDK…KLTA), 232-251 (RQED…KPEV), 259-289 (RDSR…REKQ), 467-476 (DKQRQKRLQE), and 484-493 (SGEKKDRLEV). The residue at position 85 (S85) is a Phosphoserine. At S135 the chain carries Phosphoserine. 8 consecutive repeat copies span residues 165 to 180 (AAVD…REER), 181 to 196 (AAAT…GSVR), 197 to 212 (NAGL…EEVK), 213 to 227 (EPSK…AENR), 228 to 243 (STVG…ESRE), 244 to 257 (DRDK…IGCG), 258 to 273 (SRDS…KEET), and 274 to 288 (QPDK…TREK). The tract at residues 165 to 288 (AAVDRKEAGK…VREEGKTREK (124 aa)) is 8 X approximate tandem repeats. Composition is skewed to pro residues over residues 503 to 513 (SPKPSPQPSPK) and 527 to 538 (AAPPPPPPPLAP). The segment at 503–522 (SPKPSPQPSPKSAPKNSPKK) is 5 X 4 AA approximate tandem repeats. The residue at position 550 (S550) is a Phosphoserine. The region spanning 569–588 (SRDQLLAAIRSSNLKQLKKV) is the WH2 domain.

As to expression, detected in smooth muscle, in stomach and uterus, blood vessel wall, and in slow fibers in extraocular muscle, urinary bladder and sternothyroid muscle (at protein level).

It localises to the cytoplasm. It is found in the myofibril. The protein localises to the sarcomere. Its subcellular location is the cytoskeleton. Functionally, required for proper contractility of visceral smooth muscle cells. Mediates nucleation of actin filaments. The sequence is that of Leiomodin-1 from Rattus norvegicus (Rat).